A 375-amino-acid polypeptide reads, in one-letter code: 23S rRNA (uracil(747)-C(5))-methyltransferase RlmC (375 aa).

[4Fe-4S] cluster is bound by residues Cys3, Cys11, Cys14, and Cys87. Positions 212, 241, 262, and 307 each coordinate S-adenosyl-L-methionine. Cys334 serves as the catalytic Nucleophile.

This sequence belongs to the class I-like SAM-binding methyltransferase superfamily. RNA M5U methyltransferase family. RlmC subfamily.

It carries out the reaction uridine(747) in 23S rRNA + S-adenosyl-L-methionine = 5-methyluridine(747) in 23S rRNA + S-adenosyl-L-homocysteine + H(+). Catalyzes the formation of 5-methyl-uridine at position 747 (m5U747) in 23S rRNA. This Salmonella agona (strain SL483) protein is 23S rRNA (uracil(747)-C(5))-methyltransferase RlmC.